We begin with the raw amino-acid sequence, 258 residues long: 5'-nucleotidase SurE (258 aa).

Positions 9, 10, 42, and 96 each coordinate a divalent metal cation.

Belongs to the SurE nucleotidase family. Requires a divalent metal cation as cofactor.

It localises to the cytoplasm. The catalysed reaction is a ribonucleoside 5'-phosphate + H2O = a ribonucleoside + phosphate. Functionally, nucleotidase that shows phosphatase activity on nucleoside 5'-monophosphates. The sequence is that of 5'-nucleotidase SurE from Campylobacter jejuni subsp. jejuni serotype O:6 (strain 81116 / NCTC 11828).